A 170-amino-acid chain; its full sequence is Acetyl-CoA decarbonylase/synthase complex subunit epsilon 2 (170 aa).

Belongs to the CdhB family. In terms of assembly, heterotetramer of two alpha and two epsilon subunits. The ACDS complex is made up of alpha, epsilon, beta, gamma and delta subunits with a probable stoichiometry of (alpha(2)epsilon(2))(4)-beta(8)-(gamma(1)delta(1))(8).

The protein operates within one-carbon metabolism; methanogenesis from acetate. Its function is as follows. Part of a complex that catalyzes the reversible cleavage of acetyl-CoA, allowing growth on acetate as sole source of carbon and energy. The alpha-epsilon subcomponent functions as a carbon monoxide dehydrogenase. The precise role of the epsilon subunit is unclear; it may have a stabilizing role within the alpha(2)epsilon(2) component and/or be involved in electron transfer to FAD during a potential FAD-mediated CO oxidation. In Methanosarcina acetivorans (strain ATCC 35395 / DSM 2834 / JCM 12185 / C2A), this protein is Acetyl-CoA decarbonylase/synthase complex subunit epsilon 2 (cdhB2).